We begin with the raw amino-acid sequence, 488 residues long: Glutamyl-tRNA(Gln) amidotransferase subunit A (488 aa).

Catalysis depends on charge relay system residues Lys77 and Ser152. Ser176 (acyl-ester intermediate) is an active-site residue.

Belongs to the amidase family. GatA subfamily. As to quaternary structure, heterotrimer of A, B and C subunits.

The catalysed reaction is L-glutamyl-tRNA(Gln) + L-glutamine + ATP + H2O = L-glutaminyl-tRNA(Gln) + L-glutamate + ADP + phosphate + H(+). Allows the formation of correctly charged Gln-tRNA(Gln) through the transamidation of misacylated Glu-tRNA(Gln) in organisms which lack glutaminyl-tRNA synthetase. The reaction takes place in the presence of glutamine and ATP through an activated gamma-phospho-Glu-tRNA(Gln). The protein is Glutamyl-tRNA(Gln) amidotransferase subunit A of Streptococcus mutans serotype c (strain ATCC 700610 / UA159).